A 198-amino-acid chain; its full sequence is Na(+)-translocating NADH-quinone reductase subunit E (198 aa).

A run of 6 helical transmembrane segments spans residues 11–31 (SVFI…FLAV), 35–55 (VSTA…AVPA), 77–97 (FLNF…LEMI), 110–130 (GIFL…SFMV), 140–160 (VVYG…LAGL), and 176–196 (LGIT…FSGI).

It belongs to the NqrDE/RnfAE family. In terms of assembly, composed of six subunits; NqrA, NqrB, NqrC, NqrD, NqrE and NqrF.

Its subcellular location is the cell inner membrane. It catalyses the reaction a ubiquinone + n Na(+)(in) + NADH + H(+) = a ubiquinol + n Na(+)(out) + NAD(+). NQR complex catalyzes the reduction of ubiquinone-1 to ubiquinol by two successive reactions, coupled with the transport of Na(+) ions from the cytoplasm to the periplasm. NqrA to NqrE are probably involved in the second step, the conversion of ubisemiquinone to ubiquinol. The sequence is that of Na(+)-translocating NADH-quinone reductase subunit E from Actinobacillus pleuropneumoniae serotype 5b (strain L20).